A 242-amino-acid polypeptide reads, in one-letter code: Small ribosomal subunit protein uS2 (242 aa).

Belongs to the universal ribosomal protein uS2 family.

This chain is Small ribosomal subunit protein uS2, found in Neisseria gonorrhoeae (strain ATCC 700825 / FA 1090).